A 215-amino-acid polypeptide reads, in one-letter code: Uridine kinase (215 aa).

16 to 23 (GASASGKS) is an ATP binding site.

The protein belongs to the uridine kinase family.

Its subcellular location is the cytoplasm. It catalyses the reaction uridine + ATP = UMP + ADP + H(+). The catalysed reaction is cytidine + ATP = CMP + ADP + H(+). It participates in pyrimidine metabolism; CTP biosynthesis via salvage pathway; CTP from cytidine: step 1/3. It functions in the pathway pyrimidine metabolism; UMP biosynthesis via salvage pathway; UMP from uridine: step 1/1. The sequence is that of Uridine kinase from Aliivibrio salmonicida (strain LFI1238) (Vibrio salmonicida (strain LFI1238)).